The chain runs to 168 residues: Myosin regulatory light chain 11 (168 aa).

The residue at position 2 (alanine 2) is a N,N,N-trimethylalanine. Serine 15 bears the Phosphoserine mark. 3 EF-hand domains span residues 24–59, 94–129, and 130–165; these read TQIQ…MGRL, DPED…QCDR, and FTPE…GEDK. Ca(2+) is bound by residues aspartate 37, asparagine 39, aspartate 41, and aspartate 48.

Myosin is a hexamer of 2 heavy chains and 4 light chains. The N-terminus is blocked. N,N,N-trimethylalanine, found in other myosin light chains would not have been detected in the N-terminal tryptic peptide in PubMed:7358336 because it would remain trimethylated and ninhydrin negative after hydrolysis.

In terms of biological role, myosin regulatory subunit that plays an essential to maintain muscle integrity during early development. Plays a role in muscle contraction. This Gallus gallus (Chicken) protein is Myosin regulatory light chain 11 (MYL11).